A 333-amino-acid chain; its full sequence is Glycerol-3-phosphate dehydrogenase [NAD(P)+] (333 aa).

The NADPH site is built by tyrosine 14, histidine 34, and lysine 108. Lysine 108, glycine 137, and threonine 139 together coordinate sn-glycerol 3-phosphate. Alanine 141 provides a ligand contact to NADPH. 5 residues coordinate sn-glycerol 3-phosphate: lysine 193, aspartate 247, serine 257, arginine 258, and asparagine 259. The active-site Proton acceptor is lysine 193. Arginine 258 contacts NADPH. 2 residues coordinate NADPH: leucine 282 and glutamate 284.

Belongs to the NAD-dependent glycerol-3-phosphate dehydrogenase family.

The protein localises to the cytoplasm. The catalysed reaction is sn-glycerol 3-phosphate + NAD(+) = dihydroxyacetone phosphate + NADH + H(+). The enzyme catalyses sn-glycerol 3-phosphate + NADP(+) = dihydroxyacetone phosphate + NADPH + H(+). It participates in membrane lipid metabolism; glycerophospholipid metabolism. Its function is as follows. Catalyzes the reduction of the glycolytic intermediate dihydroxyacetone phosphate (DHAP) to sn-glycerol 3-phosphate (G3P), the key precursor for phospholipid synthesis. In Blochmanniella floridana, this protein is Glycerol-3-phosphate dehydrogenase [NAD(P)+].